We begin with the raw amino-acid sequence, 469 residues long: DENN domain-containing protein 2D (469 aa).

Residues 17–44 form a disordered region; the sequence is LPRLRAGQSQNNPGEAVTEPERIQEHSP. In terms of domain architecture, uDENN spans 55 to 204; that stretch reads EYLLVVSLKK…AFPAPGKTVT (150 aa). In terms of domain architecture, cDENN spans 226–359; it reads HLEHVDFSVL…LQDDILDSLG (134 aa). The region spanning 361–445 is the dDENN domain; that stretch reads GINELKTSEQ…QEAEKSRNPP (85 aa).

Its subcellular location is the cytoplasm. In terms of biological role, guanine nucleotide exchange factor (GEF) which may activate RAB9A and RAB9B. Promotes the exchange of GDP to GTP, converting inactive GDP-bound Rab proteins into their active GTP-bound form. The protein is DENN domain-containing protein 2D (Dennd2d) of Mus musculus (Mouse).